Reading from the N-terminus, the 191-residue chain is Dephospho-CoA kinase (191 aa).

A DPCK domain is found at 3–191 (AIGITGSYAS…KLILVIARKL (189 aa)). 11–16 (ASGKTF) is a binding site for ATP.

Belongs to the CoaE family.

It is found in the cytoplasm. It catalyses the reaction 3'-dephospho-CoA + ATP = ADP + CoA + H(+). It functions in the pathway cofactor biosynthesis; coenzyme A biosynthesis; CoA from (R)-pantothenate: step 5/5. In terms of biological role, catalyzes the phosphorylation of the 3'-hydroxyl group of dephosphocoenzyme A to form coenzyme A. This chain is Dephospho-CoA kinase, found in Rickettsia felis (strain ATCC VR-1525 / URRWXCal2) (Rickettsia azadi).